Consider the following 74-residue polypeptide: Antimicrobial peptide AcrAP2 (74 aa).

An N-terminal signal peptide occupies residues 1-22 (MEIKYLLTVFLVLLIVSDHCQA). Lysine 40 carries the post-translational modification Lysine amide. A propeptide spanning residues 46 to 74 (NLDGQIDRFRNFRKRDAELEELLSKLPIY) is cleaved from the precursor.

The protein belongs to the non-disulfide-bridged peptide (NDBP) superfamily. Short antimicrobial peptide (group 4) family. Expressed by the venom gland.

Its subcellular location is the secreted. The protein resides in the target cell membrane. Functionally, has antimicrobial activity against the Gram-positive bacteria S.aureus (MIC=8 uM) and the yeast C.albicans (MIC=16 uM). Causes hemolysis on horse erythrocytes (64 uM for 100% hemolysis). Minimum bactericidal concentrations have also been tested against S.aureus and is four-fold higher (MBC=32 uM). The polypeptide is Antimicrobial peptide AcrAP2 (Androctonus crassicauda (Arabian fat-tailed scorpion)).